The chain runs to 438 residues: Xylose isomerase (438 aa).

Residues histidine 100 and aspartate 103 contribute to the active site. 7 residues coordinate Mg(2+): glutamate 231, glutamate 267, histidine 270, aspartate 295, aspartate 306, aspartate 308, and aspartate 338.

The protein belongs to the xylose isomerase family. As to quaternary structure, homotetramer. Mg(2+) serves as cofactor.

The protein localises to the cytoplasm. It catalyses the reaction alpha-D-xylose = alpha-D-xylulofuranose. The protein is Xylose isomerase of Caldanaerobacter subterraneus subsp. yonseiensis (Thermoanaerobacter yonseiensis).